A 90-amino-acid chain; its full sequence is Probable Fe(2+)-trafficking protein (90 aa).

The protein belongs to the Fe(2+)-trafficking protein family.

Could be a mediator in iron transactions between iron acquisition and iron-requiring processes, such as synthesis and/or repair of Fe-S clusters in biosynthetic enzymes. The protein is Probable Fe(2+)-trafficking protein of Nitrosomonas eutropha (strain DSM 101675 / C91 / Nm57).